The following is a 237-amino-acid chain: Peptidase E (237 aa).

Residues serine 122, aspartate 137, and histidine 159 each act as charge relay system in the active site.

Belongs to the peptidase S51 family.

It localises to the cytoplasm. The enzyme catalyses Dipeptidase E catalyzes the hydrolysis of dipeptides Asp-|-Xaa. It does not act on peptides with N-terminal Glu, Asn or Gln, nor does it cleave isoaspartyl peptides.. In terms of biological role, hydrolyzes dipeptides containing N-terminal aspartate residues. May play a role in allowing the cell to use peptide aspartate to spare carbon otherwise required for the synthesis of the aspartate family of amino acids. The polypeptide is Peptidase E (Shewanella baltica (strain OS185)).